The sequence spans 459 residues: Cobyrinate a,c-diamide synthase (459 aa).

A GATase cobBQ-type domain is found at 252-446; the sequence is TLALADDEAF…LHVHFAQRPE (195 aa). The active-site Nucleophile is the Cys-334.

This sequence belongs to the CobB/CbiA family. Monomer. Mg(2+) serves as cofactor.

It carries out the reaction cob(II)yrinate + 2 L-glutamine + 2 ATP + 2 H2O = cob(II)yrinate a,c diamide + 2 L-glutamate + 2 ADP + 2 phosphate + 2 H(+). Its pathway is cofactor biosynthesis; adenosylcobalamin biosynthesis; cob(II)yrinate a,c-diamide from sirohydrochlorin (anaerobic route): step 10/10. Functionally, catalyzes the ATP-dependent amidation of the two carboxylate groups at positions a and c of cobyrinate, using either L-glutamine or ammonia as the nitrogen source. Is able to use other nucleotide triphosphates as substrate, such as GTP or UTP, although less efficiently than ATP. The protein is Cobyrinate a,c-diamide synthase of Salmonella typhimurium (strain LT2 / SGSC1412 / ATCC 700720).